The chain runs to 587 residues: Polyadenylate-binding protein-interacting protein 3 (587 aa).

Residues 51–132 (LLVYFTTCNI…LVQVIAKDLP (82 aa)) enclose the Sm domain. Positions 422–503 (AKSENSSGWP…QSPQSPVFDG (82 aa)) are disordered. Residues 431–464 (PGSSISRNSENSAASSASNLPILSPSSSGSLSSE) are compositionally biased toward low complexity. A PAM2-like 1; degenerate motif is present at residues 467 to 475 (TLNPNAKEF). The PAM2-like 2 motif lies at 476-486 (KLNPNAKSFKP). A compositionally biased stretch (polar residues) spans 486-498 (PSPSATRPQSPQS).

In Arabidopsis thaliana (Mouse-ear cress), this protein is Polyadenylate-binding protein-interacting protein 3 (CID3).